Reading from the N-terminus, the 27-residue chain is Pyruvate dehydrogenase protein X component, mitochondrial (27 aa).

The interval 1 to 27 (FRLSPAARNILEKHSLDASQGTATGPR) is disordered. The Peripheral subunit-binding (PSBD) domain occupies 2 to 27 (RLSPAARNILEKHSLDASQGTATGPR). N6-acetyllysine is present on lysine 13. Position 15 is a phosphoserine (serine 15). Positions 17–27 (DASQGTATGPR) are enriched in polar residues.

This sequence belongs to the 2-oxoacid dehydrogenase family. Part of the inner core of the multimeric pyruvate dehydrogenase complex that is composed of about 48 DLAT and 12 PDHX molecules. This core binds multiple copies of pyruvate dehydrogenase (subunits PDH1A and PDHB, E1), dihydrolipoamide acetyltransferase (DLAT, E2) and lipoamide dehydrogenase (DLD, E3). Interacts with SIRT4. Interacts with DLD.

Its subcellular location is the mitochondrion matrix. Functionally, required for anchoring dihydrolipoamide dehydrogenase (E3) to the dihydrolipoamide transacetylase (E2) core of the pyruvate dehydrogenase complexes of eukaryotes. This specific binding is essential for a functional PDH complex. The sequence is that of Pyruvate dehydrogenase protein X component, mitochondrial from Mesocricetus auratus (Golden hamster).